We begin with the raw amino-acid sequence, 106 residues long: Nucleoid-associated protein DIP0260 (106 aa).

The protein belongs to the YbaB/EbfC family. As to quaternary structure, homodimer.

It localises to the cytoplasm. It is found in the nucleoid. Binds to DNA and alters its conformation. May be involved in regulation of gene expression, nucleoid organization and DNA protection. The polypeptide is Nucleoid-associated protein DIP0260 (Corynebacterium diphtheriae (strain ATCC 700971 / NCTC 13129 / Biotype gravis)).